The primary structure comprises 323 residues: Phosphatidylethanolamine:ceramide ethanolaminephosphotransferase (323 aa).

Topologically, residues Met-1–Gln-26 are cytoplasmic. Residues Val-27–Ile-47 form a helical membrane-spanning segment. Over Thr-48–Pro-73 the chain is Extracellular. The helical transmembrane segment at Phe-74–Ala-94 threads the bilayer. The Cytoplasmic portion of the chain corresponds to Phe-95 to Arg-147. Residues Phe-148–Leu-168 traverse the membrane as a helical segment. Topologically, residues Pro-169–Thr-211 are extracellular. His-210 is a catalytic residue. A helical transmembrane segment spans residues Val-212 to Phe-232. Position 233 (Arg-233) is a topological domain, cytoplasmic. A helical transmembrane segment spans residues Pro-234 to Tyr-254. Catalysis depends on residues His-253 and Asp-257. Over Thr-255–Asp-257 the chain is Extracellular. Residues Val-258–Gly-278 form a helical membrane-spanning segment. Over Ala-279–Ser-323 the chain is Cytoplasmic.

The protein belongs to the sphingomyelin synthase family.

It is found in the membrane. Bidirectional lipid ethanolaminephosphotransferase capable of converting phosphatidylethanolamine (PE) and ceramide to ethanolamine-phosphorylceramide (EPC) and diacylglycerol (DAG) and vice versa. Direction is dependent on the relative concentrations of DAG and ceramide as phosphoethanolamine acceptors. Does not function strictly as a SM synthase. Essential for viability of the pathogenic bloodstream stage of this human protozoan parasite and, consequently, can be considered as potential drug target. This is Phosphatidylethanolamine:ceramide ethanolaminephosphotransferase from Trypanosoma brucei brucei (strain 927/4 GUTat10.1).